The following is an 807-amino-acid chain: F-box protein YLR352W (807 aa).

The F-box domain maps to 220-266; sequence LNDCIDLPSHVLWKILKMLPELQKLDLSHTSIDDSTLYHGIPHWKNL. Positions 607-616 are enriched in basic and acidic residues; sequence DNNSHVEDSQ. Disordered stretches follow at residues 607–647 and 716–739; these read DNNS…NPFA and HLFE…EHSS. Composition is skewed to polar residues over residues 627–644 and 723–736; these read SLLS…SSAN and SRSG…LTGE.

Interacts with SKP1 and CDC53. Component of the probable SCF(YBR352W) complex containing CDC53, SKP1, RBX1 and YBR352W.

It functions in the pathway protein modification; protein ubiquitination. Substrate recognition component of a SCF (SKP1-CUL1-F-box protein) E3 ubiquitin-protein ligase complex which mediates the ubiquitination and subsequent proteasomal degradation of target proteins. Probably recognizes and binds to phosphorylated target proteins. This Saccharomyces cerevisiae (strain ATCC 204508 / S288c) (Baker's yeast) protein is F-box protein YLR352W.